Here is a 191-residue protein sequence, read N- to C-terminus: dCTP deaminase (191 aa).

DCTP is bound by residues 112–117 (KSTYAR), 136–138 (TLE), Gln-157, Tyr-173, and Gln-183. Catalysis depends on Glu-138, which acts as the Proton donor/acceptor.

It belongs to the dCTP deaminase family. As to quaternary structure, homotrimer.

The enzyme catalyses dCTP + H2O + H(+) = dUTP + NH4(+). Its pathway is pyrimidine metabolism; dUMP biosynthesis; dUMP from dCTP (dUTP route): step 1/2. Functionally, catalyzes the deamination of dCTP to dUTP. The sequence is that of dCTP deaminase from Psychrobacter cryohalolentis (strain ATCC BAA-1226 / DSM 17306 / VKM B-2378 / K5).